The following is a 182-amino-acid chain: Peptidyl-prolyl cis-trans isomerase H (182 aa).

One can recognise a PPIase cyclophilin-type domain in the interval 15-181 (FFDITIGGEP…LDVVISQCGE (167 aa)).

It belongs to the cyclophilin-type PPIase family. PPIase H subfamily.

It is found in the nucleus. It catalyses the reaction [protein]-peptidylproline (omega=180) = [protein]-peptidylproline (omega=0). Functionally, PPIases accelerate the folding of proteins. It catalyzes the cis-trans isomerization of proline imidic peptide bonds in oligopeptides. This is Peptidyl-prolyl cis-trans isomerase H (CYP3) from Gibberella zeae (strain ATCC MYA-4620 / CBS 123657 / FGSC 9075 / NRRL 31084 / PH-1) (Wheat head blight fungus).